A 183-amino-acid chain; its full sequence is Capsid protein (183 aa).

Positions 136 to 183 (NAPILSTLPETTVVRRRGRSPRRRTPSPRRRRSQSPRRRRSQSRESQC) are disordered. Residues 149-176 (VRRRGRSPRRRTPSPRRRRSQSPRRRRS) show a composition bias toward basic residues. 3 positions are modified to phosphoserine; by host: Ser-155, Ser-162, and Ser-170. The 1; half-length repeat unit spans residues 155–161 (SPRRRTP). The segment at 155-177 (SPRRRTPSPRRRRSQSPRRRRSQ) is 3 X 8 AA repeats of S-P-R-R-R-[PR]-S-Q. A Bipartite nuclear localization signal motif is present at residues 158–175 (RRTPSPRRRRSQSPRRRR). Tandem repeats lie at residues 162 to 169 (SPRRRRSQ) and 170 to 177 (SPRRRRSQ). An RNA binding region spans residues 177–183 (QSRESQC).

The protein belongs to the orthohepadnavirus core antigen family. As to quaternary structure, homodimerizes, then multimerizes. Interacts with cytosol exposed regions of viral L glycoprotein present in the reticulum-to-Golgi compartment. Interacts with human FLNB. Phosphorylated form interacts with host importin alpha; this interaction depends on the exposure of the NLS, which itself depends upon genome maturation and/or phosphorylation of the capsid protein. Interacts with host NUP153. In terms of processing, phosphorylated by host SRPK1, SRPK2, and maybe protein kinase C or GAPDH. Phosphorylation is critical for pregenomic RNA packaging. Protein kinase C phosphorylation is stimulated by HBx protein and may play a role in transport of the viral genome to the nucleus at the late step during the viral replication cycle.

It localises to the virion. The protein resides in the host cytoplasm. In terms of biological role, self assembles to form an icosahedral capsid. Most capsids appear to be large particles with an icosahedral symmetry of T=4 and consist of 240 copies of capsid protein, though a fraction forms smaller T=3 particles consisting of 180 capsid proteins. Entering capsids are transported along microtubules to the nucleus. Phosphorylation of the capsid is thought to induce exposure of nuclear localization signal in the C-terminal portion of the capsid protein that allows binding to the nuclear pore complex via the importin (karyopherin-) alpha and beta. Capsids are imported in intact form through the nuclear pore into the nuclear basket, where it probably binds NUP153. Only capsids that contain the mature viral genome can release the viral DNA and capsid protein into the nucleoplasm. Immature capsids get stuck in the basket. Capsids encapsulate the pre-genomic RNA and the P protein. Pre-genomic RNA is reverse-transcribed into DNA while the capsid is still in the cytoplasm. The capsid can then either be directed to the nucleus, providing more genomes for transcription, or bud through the endoplasmic reticulum to provide new virions. This is Capsid protein from Hepatitis B virus genotype B1 subtype adw (isolate Japan/pJDW233/1988) (HBV-B).